Here is a 369-residue protein sequence, read N- to C-terminus: GTPase Obg (369 aa).

The 159-residue stretch at 1–159 folds into the Obg domain; it reads MKFVDEVTID…KNLKLELRVL (159 aa). The 175-residue stretch at 160 to 334 folds into the OBG-type G domain; the sequence is ADVGLLGMPN…LIHAIYSHVA (175 aa). GTP is bound by residues 166–173, 191–195, 213–216, 284–287, and 315–317; these read GMPNAGKS, FTTLH, DIPG, NKLD, and SAL. Mg(2+) contacts are provided by Ser173 and Thr193. The disordered stretch occupies residues 339–369; it reads QPEEVPDPRFTTNEDLSEAAPAPDRDDPRFR.

The protein belongs to the TRAFAC class OBG-HflX-like GTPase superfamily. OBG GTPase family. Monomer. Requires Mg(2+) as cofactor.

It localises to the cytoplasm. Its function is as follows. An essential GTPase which binds GTP, GDP and possibly (p)ppGpp with moderate affinity, with high nucleotide exchange rates and a fairly low GTP hydrolysis rate. Plays a role in control of the cell cycle, stress response, ribosome biogenesis and in those bacteria that undergo differentiation, in morphogenesis control. The polypeptide is GTPase Obg (Leptothrix cholodnii (strain ATCC 51168 / LMG 8142 / SP-6) (Leptothrix discophora (strain SP-6))).